The chain runs to 876 residues: Alanine--tRNA ligase (876 aa).

Lys74 is subject to N6-acetyllysine. His564, His568, Cys666, and His670 together coordinate Zn(2+).

It belongs to the class-II aminoacyl-tRNA synthetase family. In terms of assembly, homotetramer. Zn(2+) serves as cofactor.

The protein resides in the cytoplasm. The enzyme catalyses tRNA(Ala) + L-alanine + ATP = L-alanyl-tRNA(Ala) + AMP + diphosphate. Functionally, catalyzes the attachment of alanine to tRNA(Ala) in a two-step reaction: alanine is first activated by ATP to form Ala-AMP and then transferred to the acceptor end of tRNA(Ala). Also edits incorrectly charged Ser-tRNA(Ala) and Gly-tRNA(Ala) via its editing domain. This chain is Alanine--tRNA ligase, found in Shigella boydii serotype 18 (strain CDC 3083-94 / BS512).